Reading from the N-terminus, the 346-residue chain is Annexin A1 (346 aa).

Residue alanine 2 is modified to N-acetylalanine. Serine 5 is subject to Phosphoserine; by TRPM7. Glutamine 19 participates in a covalent cross-link: Isoglutamyl lysine isopeptide (Gln-Lys) (interchain with K-?). Tyrosine 21 carries the phosphotyrosine modification. Serine 27 bears the Phosphoserine; by PKC mark. Residues serine 34 and serine 37 each carry the phosphoserine modification. Annexin repeat units follow at residues 42–113 (FNVS…AMLK), 114–185 (TPAQ…ALAK), 197–269 (DLAD…TIVK), and 273–344 (STPA…ALCG). Lysine 58 is modified (N6-acetyllysine). 11 residues coordinate Ca(2+): glycine 59, valine 60, glutamate 62, arginine 97, leucine 100, glutamate 105, methionine 127, glycine 129, glycine 131, threonine 132, and glutamate 134. Threonine 136 is subject to Phosphothreonine. Positions 171, 210, and 213 each coordinate Ca(2+). Residue lysine 214 forms a Glycyl lysine isopeptide (Lys-Gly) (interchain with G-Cter in SUMO1); alternate linkage. A Glycyl lysine isopeptide (Lys-Gly) (interchain with G-Cter in SUMO2); alternate cross-link involves residue lysine 214. Ca(2+)-binding residues include glycine 215, aspartate 253, glutamate 255, and leucine 256. Lysine 257 participates in a covalent cross-link: Glycyl lysine isopeptide (Lys-Gly) (interchain with G-Cter in SUMO1). Ca(2+)-binding residues include glutamate 261, methionine 286, glycine 288, and glycine 290. The residue at position 312 (lysine 312) is an N6-acetyllysine. Cysteine 324 and cysteine 343 are disulfide-bonded. The Ca(2+) site is built by leucine 328, glutamate 330, and threonine 331. A Glycyl lysine isopeptide (Lys-Gly) (interchain with G-Cter in SUMO1) cross-link involves residue lysine 332. Position 336 (glutamate 336) interacts with Ca(2+).

The protein belongs to the annexin family. In terms of assembly, homodimer; non-covalently linked. Homodimer; linked by transglutamylation. Homodimers linked by transglutamylation are observed in placenta, but not in other tissues. Interacts with S100A11. Heterotetramer, formed by two molecules each of S100A11 and ANXA1. Interacts with DYSF. Interacts with EGFR. In terms of processing, phosphorylated by protein kinase C, EGFR and TRPM7. Phosphorylated in response to EGF treatment. Sumoylated. Post-translationally, proteolytically cleaved by cathepsin CTSG to release the active N-terminal peptide Ac2-26. In terms of tissue distribution, detected in lung. Detected at the apical membrane of airway epithelial cells. Detected in intestinal epithelial cells. Detected in skeletal muscle. Detected in prostate. Detected in thymus (at protein level). Detected in stomach, lung, spleen, ovary and uterus, and at lower levels in kidney, thymus and heart.

The protein localises to the nucleus. It localises to the cytoplasm. The protein resides in the cell projection. Its subcellular location is the cilium. It is found in the basolateral cell membrane. The protein localises to the lateral cell membrane. It localises to the cell membrane. The protein resides in the apical cell membrane. Its subcellular location is the membrane. It is found in the early endosome. The protein localises to the cytoplasmic vesicle membrane. It localises to the endosome membrane. The protein resides in the secreted. Its subcellular location is the extracellular space. It is found in the extracellular exosome. The protein localises to the cytoplasmic vesicle. It localises to the secretory vesicle lumen. The protein resides in the phagocytic cup. Functionally, plays important roles in the innate immune response as effector of glucocorticoid-mediated responses and regulator of the inflammatory process. Has anti-inflammatory activity. Plays a role in glucocorticoid-mediated down-regulation of the early phase of the inflammatory response. Contributes to the adaptive immune response by enhancing signaling cascades that are triggered by T-cell activation, regulates differentiation and proliferation of activated T-cells. Promotes the differentiation of T-cells into Th1 cells and negatively regulates differentiation into Th2 cells. Has no effect on unstimulated T-cells. Negatively regulates hormone exocytosis via activation of the formyl peptide receptors and reorganization of the actin cytoskeleton. Has high affinity for Ca(2+) and can bind up to eight Ca(2+) ions. Displays Ca(2+)-dependent binding to phospholipid membranes. Plays a role in the formation of phagocytic cups and phagosomes. Plays a role in phagocytosis by mediating the Ca(2+)-dependent interaction between phagosomes and the actin cytoskeleton. In terms of biological role, functions at least in part by activating the formyl peptide receptors and downstream signaling cascades. Promotes chemotaxis of granulocytes and monocytes via activation of the formyl peptide receptors. Promotes rearrangement of the actin cytoskeleton, cell polarization and cell migration. Promotes resolution of inflammation and wound healing. Acts via neutrophil N-formyl peptide receptors to enhance the release of CXCL2. This Mus musculus (Mouse) protein is Annexin A1 (Anxa1).